Here is a 610-residue protein sequence, read N- to C-terminus: Elongation factor 4 (610 aa).

The region spanning 14 to 196 is the tr-type G domain; sequence NRIRNFSIIA…ALVANIPPPK (183 aa). Residues 26–31 and 143–146 contribute to the GTP site; these read DHGKST and NKID.

The protein belongs to the TRAFAC class translation factor GTPase superfamily. Classic translation factor GTPase family. LepA subfamily.

The protein resides in the cell inner membrane. It carries out the reaction GTP + H2O = GDP + phosphate + H(+). Functionally, required for accurate and efficient protein synthesis under certain stress conditions. May act as a fidelity factor of the translation reaction, by catalyzing a one-codon backward translocation of tRNAs on improperly translocated ribosomes. Back-translocation proceeds from a post-translocation (POST) complex to a pre-translocation (PRE) complex, thus giving elongation factor G a second chance to translocate the tRNAs correctly. Binds to ribosomes in a GTP-dependent manner. The chain is Elongation factor 4 from Legionella pneumophila (strain Paris).